Consider the following 782-residue polypeptide: Transcription factor SOX-30 (782 aa).

Disordered stretches follow at residues Met-1 to Val-37, Leu-95 to Ala-117, and Pro-139 to Lys-226. Pro residues-rich tracts occupy residues Glu-7 to Gln-35 and Pro-97 to Pro-106. Positions Leu-203–Lys-226 are enriched in basic and acidic residues. The segment at residues Val-366 to Val-434 is a DNA-binding region (HMG box). 3 disordered regions span residues Pro-501–Pro-604, Tyr-704–Pro-724, and Ala-756–Leu-782. Polar residues predominate over residues Thr-512 to Gly-522. Residues Ala-525–Pro-538 show a composition bias toward pro residues. Residues Ser-555–Arg-574 show a composition bias toward polar residues. Positions Tyr-704–Glu-718 are enriched in basic and acidic residues.

In terms of assembly, interacts with CTNNB1, competitively inhibiting CTNNB1-TCF7L2/TCF4 interaction. Expressed in the lung (at protein level). Expressed in testes (at protein level). Expressed in preleptotene spermatocytes, round spermatids, and elongated spermatids in the testis (at protein level). Expressed in pachytene spermatocytes during stages 3 to 8 of spermatogenesis (at protein level). Increased expression in diplotene spermatocytes at stage 9-11 and in metaphase spermatocytes or secondary spermatocytes at stage 12. Expressed in ovaries.

Its subcellular location is the nucleus. It is found in the cytoplasm. Its function is as follows. Acts both as a transcriptional activator and a repressor. Binds to the DNA sequence 5'-ACAAT-3' and shows a preference for guanine residues surrounding this core motif. Binds to its own promoter and activates its own transcription. Required to activate the expression of postmeiotic genes involved in spermiogenesis. Binds to the promoter region of CTNNB1 and represses its transcription which leads to inhibition of Wnt signaling. Also inhibits Wnt signaling by binding to the CTNNB1 protein, preventing interaction of CTNNB1 with TCF7L2/TCF4. The protein is Transcription factor SOX-30 (Sox30) of Mus musculus (Mouse).